A 220-amino-acid chain; its full sequence is Translation initiation factor 6 (220 aa).

The protein belongs to the eIF-6 family.

Binds to the 50S ribosomal subunit and prevents its association with the 30S ribosomal subunit to form the 70S initiation complex. The chain is Translation initiation factor 6 from Pyrobaculum arsenaticum (strain DSM 13514 / JCM 11321 / PZ6).